Consider the following 479-residue polypeptide: Poly(A) polymerase catalytic subunit (479 aa).

Residues Asp-202 and Asp-204 contribute to the active site. Ca(2+) contacts are provided by Asp-202, Asp-204, and Asp-253.

Belongs to the poxviridae poly(A) polymerase catalytic subunit family. Heterodimer of a large (catalytic) subunit and a small (regulatory) subunit.

It carries out the reaction RNA(n) + ATP = RNA(n)-3'-adenine ribonucleotide + diphosphate. Functionally, polymerase that creates the 3'-poly(A) tail of mRNA's. The polypeptide is Poly(A) polymerase catalytic subunit (OPG063) (Homo sapiens (Human)).